Here is a 58-residue protein sequence, read N- to C-terminus: Enterocin-HF (58 aa).

A propeptide spanning residues 1–15 (MEKLTVKEMSQVVGG) is cleaved from the precursor. A disulfide bond links Cys-24 and Cys-29.

It localises to the secreted. In terms of biological role, bacteriocin. The protein is Enterocin-HF (entHF) of Enterococcus faecium (Streptococcus faecium).